A 262-amino-acid chain; its full sequence is Versicolorin reductase 1 (262 aa).

NADP(+) is bound by residues isoleucine 21, aspartate 67, asparagine 94, and arginine 127. Residues serine 143 and serine 144 each act as proton donor in the active site. Tyrosine 158, lysine 162, isoleucine 191, and threonine 193 together coordinate NADP(+). The active-site Proton acceptor is tyrosine 158. Lysine 162 acts as the Lowers pKa of active site Tyr in catalysis.

Belongs to the short-chain dehydrogenases/reductases (SDR) family.

Its subcellular location is the cytoplasm. It localises to the cytosol. It catalyses the reaction (4S,8R)-2,13,16,20-tetrahydroxy-7,9-dioxapentacyclo[10.8.0.0(3,10).0(4,8).0(14,19)]icosa-1(12),2,5,10,13,16,19-heptaen-18-one + NADPH + H(+) = (4S,8R,16R)-2,13,16,20-tetrahydroxy-7,9-dioxapentacyclo[10.8.0.0(3,10).0(4,8).0(14,19)]icosa-1(12),2,5,10,13,19-hexaen-18-one + NADP(+). Its pathway is mycotoxin biosynthesis; aflatoxin biosynthesis. Cytochrome P450 monooxygenase; part of the gene cluster that mediates the biosynthesis of aflatoxins, a group of polyketide-derived furanocoumarins, and part of the most toxic and carcinogenic compounds among the known mycotoxins. The four major aflatoxins produced by A.parasiticus are aflatoxin B1 (AFB1), aflatoxin B2 (AFB2), aflatoxin G1 (AFG1) and aflatoxin G2 (AFG2). Within the aflatoxin pathway, with the cytochrome P450 monooxygenase aflN, the versicolorin reductase aflM, is involved in conversion of VERA to demethylsterigmatocystin (DMST). The biosynthesis of aflatoxins begins with the norsolorinic acid synthase aflC that combines a hexanoyl starter unit produced by the fatty acid synthase aflA/aflB and 7 malonyl-CoA extender units to synthesize the precursor NOR. The second step is the conversion of NOR to averantin and requires the norsolorinic acid ketoreductase aflD, which catalyzes the dehydration of norsolorinic acid to form (1'S)-averantin. The norsolorinic acid reductases aflE and aflF may also play a role in the conversion of NOR to AVN. The cytochrome P450 monooxygenase aflG then catalyzes the hydroxylation of AVN to 5'hydroxyaverantin (HAVN). The next step is performed by the 5'-hydroxyaverantin dehydrogenase aflH that transforms HAVN to 5'-oxoaverantin (OAVN) which is further converted to averufin (AVF) by aflK that plays a dual role in the pathway, as a 5'-oxoaverantin cyclase that mediates conversion of 5'-oxoaverantin, as well as a versicolorin B synthase in a later step in the pathway. The averufin oxidase aflI catalyzes the conversion of AVF to versiconal hemiacetal acetate (VHA). VHA is then the substrate for the versiconal hemiacetal acetate esterase aflJ to yield versiconal (VAL). Versicolorin B synthase aflK then converts VAL to versicolorin B (VERB) by closing the bisfuran ring of aflatoxin which is required for DNA-binding, thus giving to aflatoxin its activity as a mutagen. Then, the activity of the versicolorin B desaturase aflL leads to versicolorin A (VERA). A branch point starts from VERB since it can also be converted to dihydrodemethylsterigmatocystin (DMDHST), probably also by aflL, VERA being a precursor for aflatoxins B1 and G1, and DMDHST for aflatoxins B2 and G2. Next, the versicolorin reductase aflM and the cytochrome P450 monooxygenase aflN are involved in conversion of VERA to demethylsterigmatocystin (DMST). AflX and aflY seem also involved in this step, through probable aflX-mediated epoxide ring-opening step following versicolorin A oxidation and aflY-mediated Baeyer-Villiger oxidation required for the formation of the xanthone ring. The methyltransferase aflO then leads to the modification of DMST to sterigmatocystin (ST), and of DMDHST to dihydrosterigmatocystin (DHST). Both ST and DHST are then substrates of the O-methyltransferase aflP to yield O-methylsterigmatocystin (OMST) and dihydro-O-methylsterigmatocystin (DHOMST), respectively. Finally OMST is converted to aflatoxins B1 and G1, and DHOMST to aflatoxins B2 and G2, via the action of several enzymes including O-methylsterigmatocystin oxidoreductase aflQ, the cytochrome P450 monooxygenase aflU, but also the NADH-dependent flavin oxidoreductase nadA which is specifically required for the synthesis of AFG1. In Aspergillus parasiticus (strain ATCC 56775 / NRRL 5862 / SRRC 143 / SU-1), this protein is Versicolorin reductase 1.